Reading from the N-terminus, the 122-residue chain is Large ribosomal subunit protein uL14 (122 aa).

This sequence belongs to the universal ribosomal protein uL14 family. In terms of assembly, part of the 50S ribosomal subunit. Forms a cluster with proteins L3 and L19. In the 70S ribosome, L14 and L19 interact and together make contacts with the 16S rRNA in bridges B5 and B8.

Functionally, binds to 23S rRNA. Forms part of two intersubunit bridges in the 70S ribosome. This chain is Large ribosomal subunit protein uL14, found in Nautilia profundicola (strain ATCC BAA-1463 / DSM 18972 / AmH).